The primary structure comprises 146 residues: Large ribosomal subunit protein uL15 (146 aa).

The tract at residues 1–66 (MKLHELKPAP…LQRRMPKRGF (66 aa)) is disordered. Composition is skewed to gly residues over residues 21–31 (QGIGSGMGKTA) and 42–52 (SGGGVRPGFEG).

The protein belongs to the universal ribosomal protein uL15 family. Part of the 50S ribosomal subunit.

Binds to the 23S rRNA. This Pelotomaculum thermopropionicum (strain DSM 13744 / JCM 10971 / SI) protein is Large ribosomal subunit protein uL15.